The following is a 303-amino-acid chain: MKRRSKESNYNISSQRRRYREISTREKSRYIDIPLDITVEILKKLPAKSLVRFQCVSKQWSTIIGSRRDFIDSIVARSMTHPQQWWDVLLIFHYQSDKSSFFIFTHPLNTNQELVSIPGLTVDCYGYIRDDLFNHVFVFGYDPVKNKYKVMCLMITKSEEFENACFVFTLRDPKKQWRNVKCGIQHHYPWLPAVCINGAIYYRATEDHGSTFFLVSFDVRSEKFDHVNAPKELIDSKDSTLINYQGKLGFVSYERSVGIWVMEDHNKQGWSKVVDSSIGSGEIVFINKMVICHDTVYVVFFLS.

The 48-residue stretch at 27-74 (KSRYIDIPLDITVEILKKLPAKSLVRFQCVSKQWSTIIGSRRDFIDSI) folds into the F-box domain.

In Arabidopsis thaliana (Mouse-ear cress), this protein is Putative F-box protein At5g62060.